A 519-amino-acid chain; its full sequence is Probable WRKY transcription factor 33 (519 aa).

2 disordered regions span residues 1–34 (MAAS…STSS) and 123–212 (SSGV…CTFP). The span at 7–34 (TMDNSRTRQNMNGSANWSQQSGRTSTSS) shows a compositional bias: polar residues. The segment covering 130 to 142 (TTTTTTTTTTTTT) has biased composition (low complexity). The span at 164–174 (TETRPNNQAVS) shows a compositional bias: polar residues. The segment covering 178–188 (REQRKGEDGYN) has biased composition (basic and acidic residues). Positions 178 to 242 (REQRKGEDGY…YKGSHNHPKP (65 aa)) form a DNA-binding region, WRKY 1. 4 residues coordinate Zn(2+): Cys209, Cys214, His237, and His239. Disordered regions lie at residues 232–255 (VYKG…SSTF) and 267–349 (NRQA…REPR). The segment covering 245 to 254 (TRRSSSSSST) has biased composition (low complexity). Over residues 269–299 (QASSDQPNSNNSFHQSDSFGMQQEDNTTSDS) the composition is skewed to polar residues. The segment covering 323 to 332 (PEAKRWKGDN) has biased composition (basic and acidic residues). Residues 356-421 (SDIDILDDGY…YEGKHNHDVP (66 aa)) constitute a DNA-binding region (WRKY 2). Cys387, Cys392, His416, and His418 together coordinate Zn(2+).

The protein belongs to the WRKY group I family. Interacts with MKS1. Interacts with ATG18A. Interacts with SIB1 and SIB2. Interacts with VQ1 and VQ10. Post-translationally, phosphorylated by MPK4. Phosphorylated on serine residues by MPK3 and MPK6 following infection with the necrotrophic fungal pathogen B.cinerea. Highly expressed in roots, leaves and flowers, and at lower levels in stems, siliques and seeds.

The protein localises to the nucleus. Transcription factor. Interacts specifically with the W box (5'-TTGAC[CT]-3'), a frequently occurring elicitor-responsive cis-acting element. Involved in defense responses. Required for resistance to the necrotrophic fungal pathogen B.cinerea. Regulates the antagonistic relationship between defense pathways mediating responses to the bacterial pathogen P. syringae and the necrotrophic pathogen B.cinerea. Required for the phytoalexin camalexin synthesis following infection with B.cinerea. Acts as a positive regulator of the camalexin biosynthetic genes PAD3 (CYP71B15) and CYP71A13 by binding to their promoters. Acts downstream of MPK3 and MPK6 in reprogramming the expression of camalexin biosynthetic genes, which drives the metabolic flow to camalexin production. Functions with WRKY25 as positive regulator of salt stress response and abscisic acid (ABA) signaling. Functions with WRKY25 and WRKY26 as positive regulator of plant thermotolerance by partially participating in ethylene-response signal transduction pathway. The DNA-binding activity of WRKY33 is increased by SIB1 and SIB2. This chain is Probable WRKY transcription factor 33 (WRKY33), found in Arabidopsis thaliana (Mouse-ear cress).